A 401-amino-acid polypeptide reads, in one-letter code: MRTVWQHCHVATMAEGRYSAIEDAAIVTSAGLIEWIGPRAELAPVDADRTVDLGGAWITPGLIDCHTHAVFGGNRSGEFEQRLQGVSYAEIAAQGGGIASTVRATRAASEDELFASARQRVQALMRDGVTTLEIKSGYGLDLANERKMLRVARRLADELPLAVRATCLAAHALPPEYAGRADDYIAHICDEMLPALAAEGLVDAVDAFCEHLAFSPAQVERLFIKARELGLPVKLHAEQLSSLHGSSLAARYQALSADHLEFMTEEDAIAMAAAGTVAVLLPGAFYFLRETQLPPMDALRRHGVKIALASDLNPGTSPGLSLRLMLNMGCTCFRMTPEEALAGVTVHAATALGLGDSHGSLEVGKVADFVAWQIERPADLAYWLGGDLPKRVVRKGHEISN.

Histidine 66 and histidine 68 together coordinate Fe(3+). The Zn(2+) site is built by histidine 66 and histidine 68. Arginine 75, tyrosine 138, and histidine 171 together coordinate 4-imidazolone-5-propanoate. Residue tyrosine 138 participates in N-formimidoyl-L-glutamate binding. Histidine 236 serves as a coordination point for Fe(3+). Histidine 236 is a Zn(2+) binding site. Glutamine 239 contacts 4-imidazolone-5-propanoate. Aspartate 311 contributes to the Fe(3+) binding site. Aspartate 311 is a binding site for Zn(2+). Residues asparagine 313 and glycine 315 each coordinate N-formimidoyl-L-glutamate. Threonine 316 provides a ligand contact to 4-imidazolone-5-propanoate.

Belongs to the metallo-dependent hydrolases superfamily. HutI family. Zn(2+) serves as cofactor. Fe(3+) is required as a cofactor.

The protein resides in the cytoplasm. It catalyses the reaction 4-imidazolone-5-propanoate + H2O = N-formimidoyl-L-glutamate. The protein operates within amino-acid degradation; L-histidine degradation into L-glutamate; N-formimidoyl-L-glutamate from L-histidine: step 3/3. In terms of biological role, catalyzes the hydrolytic cleavage of the carbon-nitrogen bond in imidazolone-5-propanoate to yield N-formimidoyl-L-glutamate. It is the third step in the universal histidine degradation pathway. This chain is Imidazolonepropionase, found in Pseudomonas putida (Arthrobacter siderocapsulatus).